The sequence spans 329 residues: ATPase ASNA1 homolog 1 (329 aa).

26–33 (KGGVGKTT) provides a ligand contact to ATP. The active site involves D55. The ATP site is built by E235 and N262. The Zn(2+) site is built by C271 and C274.

This sequence belongs to the arsA ATPase family. Homodimer.

Its subcellular location is the cytoplasm. The protein resides in the endoplasmic reticulum. Its function is as follows. ATPase required for the post-translational delivery of tail-anchored (TA) proteins to the endoplasmic reticulum. Recognizes and selectively binds the transmembrane domain of TA proteins in the cytosol. This complex then targets to the endoplasmic reticulum by membrane-bound receptors, where the tail-anchored protein is released for insertion. This process is regulated by ATP binding and hydrolysis. ATP binding drives the homodimer towards the closed dimer state, facilitating recognition of newly synthesized TA membrane proteins. ATP hydrolysis is required for insertion. Subsequently, the homodimer reverts towards the open dimer state, lowering its affinity for the membrane-bound receptor, and returning it to the cytosol to initiate a new round of targeting. This is ATPase ASNA1 homolog 1 from Paramecium tetraurelia.